Consider the following 1104-residue polypeptide: Lon protease homolog, mitochondrial (1104 aa).

The transit peptide at 1–58 (MLPLRAFARLAQRPRLSRPTQLARSSLPRPSPSRPAAHYLALAPAPSTRFLHSSPPVL) directs the protein to the mitochondrion. Disordered stretches follow at residues 8–144 (ARLA…KEVA) and 275–295 (EGSQDSAKGEGEVKSFESEVP). The span at 22-46 (LARSSLPRPSPSRPAAHYLALAPAP) shows a compositional bias: low complexity. Positions 80 to 103 (KQDDQVEKPLPDAESSKSAEERAK) are enriched in basic and acidic residues. A compositionally biased stretch (low complexity) spans 104–128 (SQSSKPDIKASSSDSVSSSAPAPGS). Over residues 129–139 (ADGGSPPGAGG) the composition is skewed to gly residues. One can recognise a Lon N-terminal domain in the interval 155 to 444 (VLAIPITHRP…RALVLLKKEL (290 aa)). A compositionally biased stretch (basic and acidic residues) spans 281–291 (AKGEGEVKSFE). An ATP-binding site is contributed by 597–604 (GPPGVGKT). Residues 895–1082 (SPPAGVSTGL…RQVLHEAFRG (188 aa)) enclose the Lon proteolytic domain. Residues Ser987 and Lys1030 contribute to the active site.

It belongs to the peptidase S16 family. Homohexamer or homoheptamer. Organized in a ring with a central cavity.

It is found in the mitochondrion matrix. The enzyme catalyses Hydrolysis of proteins in presence of ATP.. In terms of biological role, ATP-dependent serine protease that mediates the selective degradation of misfolded, unassembled or oxidatively damaged polypeptides as well as certain short-lived regulatory proteins in the mitochondrial matrix. May also have a chaperone function in the assembly of inner membrane protein complexes. Participates in the regulation of mitochondrial gene expression and in the maintenance of the integrity of the mitochondrial genome. Binds to mitochondrial DNA in a site-specific manner. The polypeptide is Lon protease homolog, mitochondrial (Cryptococcus neoformans var. neoformans serotype D (strain JEC21 / ATCC MYA-565) (Filobasidiella neoformans)).